A 254-amino-acid chain; its full sequence is Mitochondrial cardiolipin hydrolase (254 aa).

At 1–9 (MERFRWQVA) the chain is on the mitochondrial intermembrane side. The tract at residues 1–43 (MERFRWQVAAVAAVGLALALEALPSVLCWLRAGRRQQQRPPRR) is required for mitochondrial localization. A helical membrane pass occupies residues 10 to 32 (AVAAVGLALALEALPSVLCWLRA). At 33–254 (GRRQQQRPPR…SKCSHHLSQV (222 aa)) the chain is on the cytoplasmic side. The segment at 49–82 (PSQVTCTEALLQAPGEAPSGPPAGCRCSLPHGES) adopts a C3H1-type; atypical zinc-finger fold. In terms of domain architecture, PLD phosphodiesterase spans 155–182 (DLGYMHHKFAIVDKKVLITGSLNWTTQA). Catalysis depends on residues histidine 160, lysine 162, and aspartate 167.

Belongs to the phospholipase D family. MitoPLD/Zucchini subfamily. Homodimer. Interacts with MOV10L1. Interacts with MIGA1 and MIGA2; possibly facilitating homodimer formation. Interacts with GK2.

Its subcellular location is the mitochondrion outer membrane. It localises to the nucleus membrane. The protein localises to the cell membrane. It is found in the golgi apparatus. The catalysed reaction is a cardiolipin + H2O = a 1,2-diacyl-sn-glycero-3-phospho-(1'-sn-glycerol) + a 1,2-diacyl-sn-glycero-3-phosphate + H(+). Its activity is regulated as follows. Single stranded DNA (ssDNA) hydrolase activity does not depend upon, but is stimulated by the presence of Ca(2+) and Mn(2+). MIGA1 and MIGA2 increase PLD6 self-association affinity and affects the homodimer conformation facilitating its phospholipase activity over the nuclease activity. MYC induces its expression and stimulates its phospholipase activity. Presents phospholipase and nuclease activities, depending on the different physiological conditions. Interaction with Mitoguardin (MIGA1 or MIGA2) affects the dimer conformation, facilitating the lipase activity over the nuclease activity. Plays a key role in mitochondrial fusion and fission via its phospholipase activity. In its phospholipase role, it uses the mitochondrial lipid cardiolipin as substrate to generate phosphatidate (PA or 1,2-diacyl-sn-glycero-3-phosphate), a second messenger signaling lipid. Production of PA facilitates Mitofusin-mediated fusion, whereas the cleavage of PA by the Lipin family of phosphatases produces diacylgycerol (DAG) which promotes mitochondrial fission. Both Lipin and DAG regulate mitochondrial dynamics and membrane fusion/fission, important processes for adapting mitochondrial metabolism to changes in cell physiology. Mitochondrial fusion enables cells to cope with the increased nucleotide demand during DNA synthesis. Mitochondrial function and dynamics are closely associated with biological processes such as cell growth, proliferation, and differentiation. Mediator of MYC activity, promotes mitochondrial fusion and activates AMPK which in turn inhibits YAP/TAZ, thereby inducing cell growth and proliferation. The endonuclease activity plays a critical role in PIWI-interacting RNA (piRNA) biogenesis during spermatogenesis. Implicated in spermatogenesis and sperm fertility in testicular germ cells, its single strand-specific nuclease activity is critical for the biogenesis/maturation of PIWI-interacting RNA (piRNA). MOV10L1 selectively binds to piRNA precursors and funnels them to the endonuclease that catalyzes the first cleavage step of piRNA processing to generate piRNA intermediate fragments that are subsequently loaded to Piwi proteins. Cleaves either DNA or RNA substrates with similar affinity, producing a 5' phosphate end, in this way it participates in the processing of primary piRNA transcripts. piRNAs provide essential protection against the activity of mobile genetic elements. piRNA-mediated transposon silencing is thus critical for maintaining genome stability, in particular in germline cells when transposons are mobilized as a consequence of wide-spread genomic demethylation. PA may act as signaling molecule in the recognition/transport of the precursor RNAs of primary piRNAs. Interacts with tesmin in testes, suggesting a role in spermatogenesis via association with its interacting partner. This Canis lupus familiaris (Dog) protein is Mitochondrial cardiolipin hydrolase (PLD6).